The sequence spans 691 residues: Elongation factor G (691 aa).

The tr-type G domain maps to 8 to 282; that stretch reads ERVRNIGIAA…AVIDYLPAPV (275 aa). Residues 17–24, 81–85, and 135–138 contribute to the GTP site; these read AHIDAGKT, DTPGH, and NKMD.

Belongs to the TRAFAC class translation factor GTPase superfamily. Classic translation factor GTPase family. EF-G/EF-2 subfamily.

The protein localises to the cytoplasm. Functionally, catalyzes the GTP-dependent ribosomal translocation step during translation elongation. During this step, the ribosome changes from the pre-translocational (PRE) to the post-translocational (POST) state as the newly formed A-site-bound peptidyl-tRNA and P-site-bound deacylated tRNA move to the P and E sites, respectively. Catalyzes the coordinated movement of the two tRNA molecules, the mRNA and conformational changes in the ribosome. In Synechococcus sp. (strain CC9605), this protein is Elongation factor G.